Consider the following 178-residue polypeptide: Large ribosomal subunit protein uL6 (178 aa).

The protein belongs to the universal ribosomal protein uL6 family. Part of the 50S ribosomal subunit.

This protein binds to the 23S rRNA, and is important in its secondary structure. It is located near the subunit interface in the base of the L7/L12 stalk, and near the tRNA binding site of the peptidyltransferase center. This chain is Large ribosomal subunit protein uL6, found in Streptococcus pneumoniae (strain JJA).